The sequence spans 56 residues: Ribosome modulation factor (56 aa).

Belongs to the ribosome modulation factor family.

Its subcellular location is the cytoplasm. During stationary phase, converts 70S ribosomes to an inactive dimeric form (100S ribosomes). In Proteus mirabilis (strain HI4320), this protein is Ribosome modulation factor.